The sequence spans 364 residues: Histidinol-phosphate aminotransferase (364 aa).

Lys226 is subject to N6-(pyridoxal phosphate)lysine.

The protein belongs to the class-II pyridoxal-phosphate-dependent aminotransferase family. Histidinol-phosphate aminotransferase subfamily. Homodimer. The cofactor is pyridoxal 5'-phosphate.

It carries out the reaction L-histidinol phosphate + 2-oxoglutarate = 3-(imidazol-4-yl)-2-oxopropyl phosphate + L-glutamate. Its pathway is amino-acid biosynthesis; L-histidine biosynthesis; L-histidine from 5-phospho-alpha-D-ribose 1-diphosphate: step 7/9. This Campylobacter jejuni subsp. jejuni serotype O:6 (strain 81116 / NCTC 11828) protein is Histidinol-phosphate aminotransferase.